The following is a 2170-amino-acid chain: Brefeldin A-inhibited guanine nucleotide-exchange protein 3 (2170 aa).

At Ser471 the chain carries Phosphoserine. Disordered stretches follow at residues 489–547 (EHTP…MGKV) and 613–634 (AAEKDSGRSDVSDIGSDNCSLA). The segment covering 503 to 524 (ISISVTTDTGQTTLEGELGQTT) has biased composition (polar residues). The region spanning 579–792 (RTRSYGSRYS…EELYHQVLDR (214 aa)) is the SEC7 domain. Residues 614–623 (AEKDSGRSDV) are compositionally biased toward basic and acidic residues. Phosphoserine occurs at positions 628, 632, and 1045. A helical membrane pass occupies residues 1488–1508 (PGFGIYAVVHLLLPVMSLWLL). The disordered stretch occupies residues 1843–1872 (SSDSSQQCSSEDEDIFEETAQVSPPRGKEK). At Ser1881 the chain carries Phosphoserine. Positions 1938–1955 (FQSESSTPSTGGFSGKNT) are enriched in polar residues. 2 disordered regions span residues 1938-1997 (FQSE…RKKE) and 2024-2058 (KRRQPHNLPPFPKEVKVDKKGEPLGPRGPDSPLLQ). A compositionally biased stretch (basic and acidic residues) spans 1956–1966 (PSEDDRREHLS). 2 positions are modified to phosphoserine: Ser1975 and Ser1984. 2 stretches are compositionally biased toward basic and acidic residues: residues 1986–1997 (KTEKKDPGRKKE) and 2036–2045 (KEVKVDKKGE). Phosphoserine is present on residues Ser2072, Ser2074, Ser2088, Ser2094, and Ser2096. The disordered stretch occupies residues 2078 to 2097 (ELLRQEKRPRSGSTGSSLSV). Positions 2088–2097 (SGSTGSSLSV) are enriched in low complexity.

Interacts with PHB2. Expressed in pancreatic islet (insulin granules of islet alpha and beta cells) and brain (at protein level).

It is found in the cytoplasmic vesicle. It localises to the secretory vesicle. The protein resides in the secretory vesicle membrane. Its function is as follows. Participates in the regulation of systemic glucose homeostasis, where it negatively regulates insulin granule biogenesis in pancreatic islet beta cells. Also regulates glucagon granule production in pancreatic alpha cells. Inhibits nuclear translocation of the transcriptional coregulator PHB2 and may enhance estrogen receptor alpha (ESR1) transcriptional activity in breast cancer cells. The protein is Brefeldin A-inhibited guanine nucleotide-exchange protein 3 of Mus musculus (Mouse).